The primary structure comprises 258 residues: Deoxyribose-phosphate aldolase (258 aa).

The active-site Proton donor/acceptor is the Asp-102. Catalysis depends on Lys-165, which acts as the Schiff-base intermediate with acetaldehyde. The Proton donor/acceptor role is filled by Lys-199.

It belongs to the DeoC/FbaB aldolase family. DeoC type 2 subfamily.

The protein resides in the cytoplasm. It carries out the reaction 2-deoxy-D-ribose 5-phosphate = D-glyceraldehyde 3-phosphate + acetaldehyde. It participates in carbohydrate degradation; 2-deoxy-D-ribose 1-phosphate degradation; D-glyceraldehyde 3-phosphate and acetaldehyde from 2-deoxy-alpha-D-ribose 1-phosphate: step 2/2. In terms of biological role, catalyzes a reversible aldol reaction between acetaldehyde and D-glyceraldehyde 3-phosphate to generate 2-deoxy-D-ribose 5-phosphate. In Aliivibrio fischeri (strain ATCC 700601 / ES114) (Vibrio fischeri), this protein is Deoxyribose-phosphate aldolase.